A 245-amino-acid chain; its full sequence is Eukaryotic translation initiation factor 6 (245 aa).

It belongs to the eIF-6 family. As to quaternary structure, monomer. Associates with the 60S ribosomal subunit.

Its subcellular location is the cytoplasm. The protein localises to the nucleus. It is found in the nucleolus. In terms of biological role, binds to the 60S ribosomal subunit and prevents its association with the 40S ribosomal subunit to form the 80S initiation complex in the cytoplasm. May also be involved in ribosome biogenesis. This Ostreococcus lucimarinus (strain CCE9901) protein is Eukaryotic translation initiation factor 6.